The primary structure comprises 400 residues: Elongation factor Tu (400 aa).

The 200-residue stretch at 10–209 (KPHINIGTIG…AVDDYIPTPE (200 aa)) folds into the tr-type G domain. A G1 region spans residues 19 to 26 (GHVDHGKT). 19-26 (GHVDHGKT) lines the GTP pocket. Threonine 26 contacts Mg(2+). A G2 region spans residues 60 to 64 (GITIS). A G3 region spans residues 81–84 (DCPG). GTP is bound by residues 81-85 (DCPGH) and 136-139 (NKVD). A G4 region spans residues 136 to 139 (NKVD). Residues 174–176 (SAK) form a G5 region.

Belongs to the TRAFAC class translation factor GTPase superfamily. Classic translation factor GTPase family. EF-Tu/EF-1A subfamily. As to quaternary structure, monomer.

The protein localises to the cytoplasm. The enzyme catalyses GTP + H2O = GDP + phosphate + H(+). Its function is as follows. GTP hydrolase that promotes the GTP-dependent binding of aminoacyl-tRNA to the A-site of ribosomes during protein biosynthesis. This chain is Elongation factor Tu, found in Herpetosiphon aurantiacus (Herpetosiphon giganteus).